Here is a 205-residue protein sequence, read N- to C-terminus: Large ribosomal subunit protein uL4 (205 aa).

The interval 43-77 (RRRSGTASTKGRSDVAGSRAKLFRQKGTGRARRGD) is disordered. Residues 63–73 (KLFRQKGTGRA) show a composition bias toward basic residues.

The protein belongs to the universal ribosomal protein uL4 family. Part of the 50S ribosomal subunit.

One of the primary rRNA binding proteins, this protein initially binds near the 5'-end of the 23S rRNA. It is important during the early stages of 50S assembly. It makes multiple contacts with different domains of the 23S rRNA in the assembled 50S subunit and ribosome. In terms of biological role, forms part of the polypeptide exit tunnel. The polypeptide is Large ribosomal subunit protein uL4 (Desulfosudis oleivorans (strain DSM 6200 / JCM 39069 / Hxd3) (Desulfococcus oleovorans)).